Reading from the N-terminus, the 440-residue chain is NADH-quinone oxidoreductase subunit D (440 aa).

It belongs to the complex I 49 kDa subunit family. As to quaternary structure, NDH-1 is composed of 14 different subunits. Subunits NuoB, C, D, E, F, and G constitute the peripheral sector of the complex.

The protein localises to the cell membrane. It catalyses the reaction a quinone + NADH + 5 H(+)(in) = a quinol + NAD(+) + 4 H(+)(out). Its function is as follows. NDH-1 shuttles electrons from NADH, via FMN and iron-sulfur (Fe-S) centers, to quinones in the respiratory chain. The immediate electron acceptor for the enzyme in this species is believed to be a menaquinone. Couples the redox reaction to proton translocation (for every two electrons transferred, four hydrogen ions are translocated across the cytoplasmic membrane), and thus conserves the redox energy in a proton gradient. This is NADH-quinone oxidoreductase subunit D from Acidothermus cellulolyticus (strain ATCC 43068 / DSM 8971 / 11B).